The chain runs to 483 residues: MFENTLQGALIGVTVIPTLILSLPTTSFVRYAIYPLPALLVLRALLWPPTEGLAKETYLLGLLMTDTSFKMFDYLYLQGYNAPAKFLQVDRVGRTITKVHEYPKDTLGQVKWALSLVTSHRGIGWNIQVPLQKIKYPSSRVAYIFESMVSILSIYLGLYTCGSLCDYMVQVLRKEADSPYPWVYGLFKNSIFQMVVAFMGIFAMVSNSVLVYNLARMICVTSGIKGDWGKIESWPNMFGGFEDAWSIRNVWGRAWHQNLRRCLTAPGEKVSSLIFGSSPKLGRVPRLIRRYFLVFSAFGVSGLLHSLAVYYGSKTDTMPYEDSTPLHMRPGWYVTGYFFYIQPFAITLEDFICWATGTSTESKGVKATKVRWFVGMVYTLTWFTWGTAVLWIHPQLASLGYQRTSDAELGYVHILVSTSEAASILPLNPWPAVVKTVSPTFWDVYGYFKSSGLGGYLYLYAYTTLEILGGSGFNVLKSASSVV.

8 helical membrane-spanning segments follow: residues 9–29 (ALIGVTVIPTLILSLPTTSFV), 33–53 (IYPLPALLVLRALLWPPTEGL), 141–161 (VAYIFESMVSILSIYLGLYTC), 191–211 (IFQMVVAFMGIFAMVSNSVLV), 292–312 (FLVFSAFGVSGLLHSLAVYYG), 334–354 (VTGYFFYIQPFAITLEDFICW), 372–392 (WFVGMVYTLTWFTWGTAVLWI), and 453–473 (LGGYLYLYAYTTLEILGGSGF).

Belongs to the wax synthase family.

It is found in the membrane. It participates in secondary metabolite biosynthesis; terpenoid biosynthesis. Functionally, acetyltransferase; part of the gene cluster that mediates the biosynthesis of sesquiterpenyl epoxy-cyclohexenoids (SECs) such as anthrobotrisins and arthrosporols, metabolites that possess a novel hybrid carbon skeleton consisting of a polyketide-derived epoxycyclohexenol combined with a terpenoid-derived monocyclic sesquiterpenol substructure (PKS-PTS hybrid). The SEC pathway plays an important role for fungal soil colonization via decreasing fungal nematode-capturing ability. The role of the acetyltransferase in SEC biosynthesis has still to be determined. The pathway begins with the biosynthesis of 6-methylsalicylic acid (6-MSA), the first precursor of the polyketide-derived epoxycyclohexenol in arthrosporols, by the polyketide synthase (PKS) AOL_s00215g283 via condensation of 1 acetate and 3 malonate units. The 6-methylsalicylic acid decarboxylase AOL_s00215g281 then catalyzes the decarboxylation of 6-methylsalicylic acid to yield m-cresol. The cytochrome P450 monooxygenase AOL_s00215g282 further oxidizes m-cresol to yield toluquinol. With the assistance of the oxidoreductase AOL_s00215g277, the polyprenyl transferase AOL_s00215g276 catalyzes the farnesylation of toluquinol to produce farnesyl hydroquinone, the hybrid precursor for biosynthesis of SECs. Farnesyl hydroquinone undergoes epoxidation and then subsequent dehydrogenation to form farnesyl epoxy-quinone, the first and simplest SEC. The cytochrome P450 monooxygenase AOL_s00215g278 and the FAD-dependent monooxygenase AOL_s00215g279 might be involved in the oxygenation of the phenol moiety, most likely in the epoxy formation. The cytochrome P450 monooxygenases AOL_s00215g274 and AOL_s00215g280 are involved in specific regional ketone reductions at respectively C-4 and C-1 of farnesyl epoxy-quinone PubMed:33823587. In Arthrobotrys oligospora (strain ATCC 24927 / CBS 115.81 / DSM 1491) (Nematode-trapping fungus), this protein is Acetyltransferase AOL_s00215g273.